A 217-amino-acid polypeptide reads, in one-letter code: Probable GTP-binding protein EngB (217 aa).

In terms of domain architecture, EngB-type G spans 29 to 213 (GPLEVAFAGR…RQAIGETVGV (185 aa)). GTP is bound by residues 37–44 (GRSNVGKS), 64–68 (GRTQE), 91–94 (DMPG), 158–161 (TKTD), and 192–194 (TSS). The Mg(2+) site is built by Ser-44 and Thr-66.

The protein belongs to the TRAFAC class TrmE-Era-EngA-EngB-Septin-like GTPase superfamily. EngB GTPase family. The cofactor is Mg(2+).

In terms of biological role, necessary for normal cell division and for the maintenance of normal septation. This is Probable GTP-binding protein EngB from Rhizobium leguminosarum bv. trifolii (strain WSM2304).